A 331-amino-acid chain; its full sequence is Serpentine receptor class alpha-9 (331 aa).

The next 7 helical transmembrane spans lie at 26–46, 58–78, 104–124, 142–162, 189–209, 238–258, and 275–295; these read IDLLCIVITFVTTYPAIQLVL, LILESLFFANLYQIFYGIEAI, YLKVILGTTGGMIFAQTGLMI, IIGFSITIIVFFCSSITGKLF, YFTVCTVLPLFNLGISILLKI, VCFLAFSLFILLFIYSVGVGA, and LCVVWLYTIPFIAMLLPLLLI.

This sequence belongs to the nematode receptor-like protein sra family.

It localises to the membrane. This is Serpentine receptor class alpha-9 (sra-9) from Caenorhabditis elegans.